The primary structure comprises 142 residues: Large ribosomal subunit protein uL11 (142 aa).

Belongs to the universal ribosomal protein uL11 family. In terms of assembly, part of the ribosomal stalk of the 50S ribosomal subunit. Interacts with L10 and the large rRNA to form the base of the stalk. L10 forms an elongated spine to which L12 dimers bind in a sequential fashion forming a multimeric L10(L12)X complex. One or more lysine residues are methylated.

Forms part of the ribosomal stalk which helps the ribosome interact with GTP-bound translation factors. The polypeptide is Large ribosomal subunit protein uL11 (Histophilus somni (strain 129Pt) (Haemophilus somnus)).